The chain runs to 455 residues: Probable ATP-dependent RNA helicase DDX47 (455 aa).

Residues 1–21 (MAADEEPDSPSGALQTAAEEE) are disordered. Residue Ala-2 is modified to N-acetylalanine. Position 9 is a phosphoserine (Ser-9). Positions 24-52 (KTFKDLGVTDVLCEACDQLGWAKPTKIQI) match the Q motif motif. The Helicase ATP-binding domain maps to 55–226 (IPLALQGRDI…RAALKNPVKC (172 aa)). 68 to 75 (AETGSGKT) contacts ATP. Phosphothreonine is present on Thr-149. Residues 174-177 (DEAD) carry the DEAD box motif. In terms of domain architecture, Helicase C-terminal spans 237–397 (KLQQYYLFIP…VFPTQDEEVM (161 aa)). The disordered stretch occupies residues 412 to 455 (MELREHGEKKKRKREDAGDDDDKEGAIGVRNKVAGGKMKKRKGR).

It belongs to the DEAD box helicase family. DDX47/RRP3 subfamily. In terms of assembly, interacts with AGO1 and AGO2. Interacts with GABARAP. Interacts with NOL8; the interaction is RNA-dependent.

Its subcellular location is the nucleus. It localises to the nucleolus. It catalyses the reaction ATP + H2O = ADP + phosphate + H(+). Involved in apoptosis. May have a role in rRNA processing and mRNA splicing. Associates with pre-rRNA precursors. This Mus musculus (Mouse) protein is Probable ATP-dependent RNA helicase DDX47 (Ddx47).